Here is a 169-residue protein sequence, read N- to C-terminus: Ribosomal RNA large subunit methyltransferase H (169 aa).

S-adenosyl-L-methionine is bound by residues L85, G117, and 136-141 (LGELTW).

Belongs to the RNA methyltransferase RlmH family. As to quaternary structure, homodimer.

Its subcellular location is the cytoplasm. The catalysed reaction is pseudouridine(1915) in 23S rRNA + S-adenosyl-L-methionine = N(3)-methylpseudouridine(1915) in 23S rRNA + S-adenosyl-L-homocysteine + H(+). In terms of biological role, specifically methylates the pseudouridine at position 1915 (m3Psi1915) in 23S rRNA. This Brucella ovis (strain ATCC 25840 / 63/290 / NCTC 10512) protein is Ribosomal RNA large subunit methyltransferase H.